The following is a 264-amino-acid chain: Small ribosomal subunit protein eS1 (264 aa).

Lys-34 is subject to N6-acetyllysine; alternate. Lys-34 participates in a covalent cross-link: Glycyl lysine isopeptide (Lys-Gly) (interchain with G-Cter in SUMO2); alternate. At Lys-56 the chain carries N6-acetyllysine. Tyr-155 carries the ADP-ribosyltyrosine modification. The interval 233–264 (GEGGSSGKAAGDETGAKVERADGYEPPVQESV) is disordered. A Phosphoserine modification is found at Ser-237. Residues 242–255 (AGDETGAKVERADG) are compositionally biased toward basic and acidic residues. Lys-249 is modified (N6-acetyllysine; alternate). Lys-249 is covalently cross-linked (Glycyl lysine isopeptide (Lys-Gly) (interchain with G-Cter in SUMO2); alternate). Tyr-256 is modified (phosphotyrosine). The residue at position 263 (Ser-263) is a Phosphoserine.

The protein belongs to the eukaryotic ribosomal protein eS1 family. Component of the small ribosomal subunit. Mature ribosomes consist of a small (40S) and a large (60S) subunit. The 40S subunit contains about 33 different proteins and 1 molecule of RNA (18S). The 60S subunit contains about 49 different proteins and 3 molecules of RNA (28S, 5.8S and 5S). Identified in a IGF2BP1-dependent mRNP granule complex containing untranslated mRNAs. Binds with high affinity to IPO4. Interacts with DDIT3. Part of the small subunit (SSU) processome, composed of more than 70 proteins and the RNA chaperone small nucleolar RNA (snoRNA) U3. Post-translationally, ADP-ribosylated at Tyr-155 by PARP1 in presence of HPF1.

The protein resides in the cytoplasm. It is found in the nucleus. It localises to the nucleolus. Its function is as follows. Component of the small ribosomal subunit. The ribosome is a large ribonucleoprotein complex responsible for the synthesis of proteins in the cell. Part of the small subunit (SSU) processome, first precursor of the small eukaryotic ribosomal subunit. During the assembly of the SSU processome in the nucleolus, many ribosome biogenesis factors, an RNA chaperone and ribosomal proteins associate with the nascent pre-rRNA and work in concert to generate RNA folding, modifications, rearrangements and cleavage as well as targeted degradation of pre-ribosomal RNA by the RNA exosome. May play a role during erythropoiesis through regulation of transcription factor DDIT3. This is Small ribosomal subunit protein eS1 (Rps3a) from Mus musculus (Mouse).